The sequence spans 334 residues: GTP 3',8-cyclase (334 aa).

The Radical SAM core domain maps to 13-239 (RFHRKFYYLR…KVKAANDGPA (227 aa)). GTP is bound at residue Arg22. Positions 29 and 33 each coordinate [4Fe-4S] cluster. Position 35 (Tyr35) interacts with S-adenosyl-L-methionine. Cys36 contributes to the [4Fe-4S] cluster binding site. GTP is bound at residue Arg73. Gly77 contacts S-adenosyl-L-methionine. Thr104 contributes to the GTP binding site. S-adenosyl-L-methionine is bound at residue Ser128. Residue Lys165 coordinates GTP. Residue Met199 coordinates S-adenosyl-L-methionine. [4Fe-4S] cluster is bound by residues Cys262 and Cys265. 267-269 (RLR) contributes to the GTP binding site. Cys279 is a binding site for [4Fe-4S] cluster.

The protein belongs to the radical SAM superfamily. MoaA family. As to quaternary structure, monomer and homodimer. Requires [4Fe-4S] cluster as cofactor.

The catalysed reaction is GTP + AH2 + S-adenosyl-L-methionine = (8S)-3',8-cyclo-7,8-dihydroguanosine 5'-triphosphate + 5'-deoxyadenosine + L-methionine + A + H(+). Its pathway is cofactor biosynthesis; molybdopterin biosynthesis. Functionally, catalyzes the cyclization of GTP to (8S)-3',8-cyclo-7,8-dihydroguanosine 5'-triphosphate. This chain is GTP 3',8-cyclase, found in Vibrio vulnificus (strain CMCP6).